Here is a 162-residue protein sequence, read N- to C-terminus: uncharacterized protein (162 aa).

An HTH asnC-type domain is found at 6 to 99; it reads LDDLDRAILK…YVTKTLSGFP (94 aa). A DNA-binding region (H-T-H motif) is located at residues 25–44; the sequence is IAEISNQLKKPESTVHFRIK.

This is an uncharacterized protein from Pyrococcus horikoshii (strain ATCC 700860 / DSM 12428 / JCM 9974 / NBRC 100139 / OT-3).